The sequence spans 206 residues: Uridine kinase (206 aa).

An ATP-binding site is contributed by 11–18 (GGTGSGKS).

It belongs to the uridine kinase family.

The protein localises to the cytoplasm. It catalyses the reaction uridine + ATP = UMP + ADP + H(+). The catalysed reaction is cytidine + ATP = CMP + ADP + H(+). It participates in pyrimidine metabolism; CTP biosynthesis via salvage pathway; CTP from cytidine: step 1/3. It functions in the pathway pyrimidine metabolism; UMP biosynthesis via salvage pathway; UMP from uridine: step 1/1. This is Uridine kinase from Clostridium botulinum (strain Okra / Type B1).